The sequence spans 218 residues: DNA ADP-ribosyl transferase (218 aa).

One can recognise a DarT domain in the interval 14-217 (ALIWRIVHRD…SVHTRSGWYF (204 aa)). NAD(+) is bound by residues 18 to 20 (RIV) and Arg-57. The tract at residues 41–59 (QAENWINIGNPELIGKRAG) is NAD(+)-binding element. Catalysis depends on Arg-57, which acts as the Proton acceptor. Residues 123 to 170 (TDSHAYYNWTNYYTSLNSLDQIDWPILQARDFRRDPDDPAKFERYQAE) form an ADP-ribosylating turn-turn loop region. Residue Glu-170 is part of the active site.

This sequence belongs to the DarT ADP-ribosyltransferase family. As to quaternary structure, interacts with cognate antitoxin DarG (via C-terminus); this heterodimeric complex neutralizes the toxic effect of DarT by preventing ssDNA binding to DarT and consequently inactivating the toxin by direct protein-protein interactions.

It catalyses the reaction a thymidine in DNA + NAD(+) = an N-(ADP-alpha-D-ribosyl)-thymidine in DNA + nicotinamide + H(+). Toxic component of the hybrid type II/IV toxin-antitoxin (TA) system DarTG, which plays a crucial role in controlling bacterial growth and bacteriophage infection. ADP-ribosylates ssDNA in the sequence TTT/TCT. In case of phage infection, DarT toxin ADP-ribosylates DNA, which inhibits both viral DNA and RNA synthesis and leads to abortive infection. Its toxic effect is neutralized by cognate antitoxin DarG. May target ssDNA loops during DNA replication, probably modifies thymidine. Wild-type protein cannot be expressed at low levels in the absence of its cognate antitoxin, but a mutant protein (G49D) can be expressed, which slows growth, rapidly inhibits DNA replication, and induces RecA expression and the SOS response. The slow growth phenotype can be suppressed by cognate antitoxin DarG. Has no activity on dsDNA in vitro. In vivo ADP-ribosylates genomic DNA (gDNA). Genetic data strongly suggests ADP-ribosylation by DarT probably generates ssDNA gaps that are repaired by the RecFOR-mediated homologous recombination pathway (RuvAB, RecG) and resolved by RuvC. In some cases these gaps probably migrate into dsDNA, where they are resolved by nucleotide excision repair (NER) detected by UvrAB, excised by UvrC, removed by UvrD, and repaired by Pol I and ligase. Other pathways may also be involved in ADP-ribosylation removal from DNA. The polypeptide is DNA ADP-ribosyl transferase (Escherichia coli O127:H6 (strain E2348/69 / EPEC)).